Consider the following 362-residue polypeptide: Poly(rC)-binding protein 2 (362 aa).

KH domains are found at residues 13 to 75 (TLTI…FAMI) and 97 to 162 (PVTL…VKQI). Lysine 115 is covalently cross-linked (Glycyl lysine isopeptide (Lys-Gly) (interchain with G-Cter in SUMO2)). Serine 169 bears the Phosphoserine mark. Lysine 181 is covalently cross-linked (Glycyl lysine isopeptide (Lys-Gly) (interchain with G-Cter in SUMO2)). 2 positions are modified to phosphoserine: serine 185 and serine 268. Residues 284-348 (TTSHELTIPN…ASISLAQYLI (65 aa)) form the KH 3 domain. A Glycyl lysine isopeptide (Lys-Gly) (interchain with G-Cter in SUMO2) cross-link involves residue lysine 319. Phosphoserine is present on residues serine 361 and serine 362.

In terms of assembly, identified in a mRNP complex, at least composed of DHX9, DDX3X, ELAVL1, HNRNPU, IGF2BP1, ILF3, PABPC1, PCBP2, PTBP2, STAU1, STAU2, SYNCRIP and YBX1. Interacts with IFIH1 and RNF135. Interacts with MAVS (via C-terminus) and ITCH (via WW domains). Interacts with CGAS; preventing the formation of liquid-like droplets in which CGAS is activated. Phosphorylated. The non-phosphorylated form(s) exhibited the strongest poly(rC)-binding activity.

It localises to the nucleus. The protein resides in the cytoplasm. Its function is as follows. Single-stranded nucleic acid binding protein that binds preferentially to oligo dC. Major cellular poly(rC)-binding protein. Also binds poly(rU). Acts as a negative regulator of antiviral signaling. Negatively regulates cellular antiviral responses mediated by MAVS signaling. It acts as an adapter between MAVS and the E3 ubiquitin ligase ITCH, therefore triggering MAVS ubiquitination and degradation. Negativeley regulates the cGAS-STING pathway via interaction with CGAS, preventing the formation of liquid-like droplets in which CGAS is activated. Together with PCBP1, required for erythropoiesis, possibly by regulating mRNA splicing. In Mus musculus (Mouse), this protein is Poly(rC)-binding protein 2 (Pcbp2).